A 242-amino-acid polypeptide reads, in one-letter code: MKILIPTAKELNLTAPSAIPNPPLAQTQAVLDELATMSVAGLASFYKISPERAEIELQAIQALREGTAQHAPALYLFDGLMYRHIKRQDYTKEESQYIEKYLAITSALYGVIPALEPIAPHRLDFMMPLKLDGKSLKAFWKEAYDQALAEDEVIFSLLSSEFETVFSKKIRQRMIGFKFLEDRGDKLKVHSTISKKARGEFLTALITNQVTEVEQMKKLNFAGFTYRPDLSSEQEMVYVKEV.

Belongs to the UPF0246 family.

The sequence is that of UPF0246 protein SSA_1395 from Streptococcus sanguinis (strain SK36).